The sequence spans 73 residues: Sec-independent protein translocase protein TatA (73 aa).

A helical transmembrane segment spans residues Met1–Gly21. Residues Met43 to Gln73 are disordered.

This sequence belongs to the TatA/E family. In terms of assembly, the Tat system comprises two distinct complexes: a TatABC complex, containing multiple copies of TatA, TatB and TatC subunits, and a separate TatA complex, containing only TatA subunits. Substrates initially bind to the TatABC complex, which probably triggers association of the separate TatA complex to form the active translocon.

Its subcellular location is the cell inner membrane. Part of the twin-arginine translocation (Tat) system that transports large folded proteins containing a characteristic twin-arginine motif in their signal peptide across membranes. TatA could form the protein-conducting channel of the Tat system. The sequence is that of Sec-independent protein translocase protein TatA from Cupriavidus pinatubonensis (strain JMP 134 / LMG 1197) (Cupriavidus necator (strain JMP 134)).